A 346-amino-acid chain; its full sequence is Phosphate acyltransferase (346 aa).

This sequence belongs to the PlsX family. Homodimer. Probably interacts with PlsY.

Its subcellular location is the cytoplasm. The enzyme catalyses a fatty acyl-[ACP] + phosphate = an acyl phosphate + holo-[ACP]. It functions in the pathway lipid metabolism; phospholipid metabolism. In terms of biological role, catalyzes the reversible formation of acyl-phosphate (acyl-PO(4)) from acyl-[acyl-carrier-protein] (acyl-ACP). This enzyme utilizes acyl-ACP as fatty acyl donor, but not acyl-CoA. This chain is Phosphate acyltransferase, found in Brucella abortus (strain S19).